A 341-amino-acid polypeptide reads, in one-letter code: Anthranilate phosphoribosyltransferase (341 aa).

Residues G80, 83–84 (GD), T88, 90–93 (NIST), 108–116 (KHGNYSVSS), and S120 each bind 5-phospho-alpha-D-ribose 1-diphosphate. G80 contacts anthranilate. S92 lines the Mg(2+) pocket. N111 lines the anthranilate pocket. Position 166 (R166) interacts with anthranilate. Mg(2+) is bound by residues D224 and E225.

The protein belongs to the anthranilate phosphoribosyltransferase family. In terms of assembly, homodimer. The cofactor is Mg(2+).

The catalysed reaction is N-(5-phospho-beta-D-ribosyl)anthranilate + diphosphate = 5-phospho-alpha-D-ribose 1-diphosphate + anthranilate. It participates in amino-acid biosynthesis; L-tryptophan biosynthesis; L-tryptophan from chorismate: step 2/5. In terms of biological role, catalyzes the transfer of the phosphoribosyl group of 5-phosphorylribose-1-pyrophosphate (PRPP) to anthranilate to yield N-(5'-phosphoribosyl)-anthranilate (PRA). The polypeptide is Anthranilate phosphoribosyltransferase (Haloquadratum walsbyi (strain DSM 16790 / HBSQ001)).